The sequence spans 230 residues: 2,3-bisphosphoglycerate-dependent phosphoglycerate mutase (230 aa).

Substrate is bound by residues 8-15 (RHGQSEWN), 21-22 (TG), R60, 87-90 (ERHY), K98, 114-115 (RR), and 183-184 (GN). The Tele-phosphohistidine intermediate role is filled by H9. The active-site Proton donor/acceptor is the E87.

The protein belongs to the phosphoglycerate mutase family. BPG-dependent PGAM subfamily.

It catalyses the reaction (2R)-2-phosphoglycerate = (2R)-3-phosphoglycerate. It functions in the pathway carbohydrate degradation; glycolysis; pyruvate from D-glyceraldehyde 3-phosphate: step 3/5. Catalyzes the interconversion of 2-phosphoglycerate and 3-phosphoglycerate. The protein is 2,3-bisphosphoglycerate-dependent phosphoglycerate mutase of Lactobacillus acidophilus (strain ATCC 700396 / NCK56 / N2 / NCFM).